The chain runs to 118 residues: NADH-quinone oxidoreductase subunit A 2 (118 aa).

A run of 3 helical transmembrane segments spans residues 5–25, 62–82, and 87–107; these read YLPI…SVIF, LIAM…PWAV, and LGMF…VGYV.

It belongs to the complex I subunit 3 family. NDH-1 is composed of 14 different subunits. Subunits NuoA, H, J, K, L, M, N constitute the membrane sector of the complex.

It is found in the cell inner membrane. The catalysed reaction is a quinone + NADH + 5 H(+)(in) = a quinol + NAD(+) + 4 H(+)(out). In terms of biological role, NDH-1 shuttles electrons from NADH, via FMN and iron-sulfur (Fe-S) centers, to quinones in the respiratory chain. The immediate electron acceptor for the enzyme in this species is believed to be ubiquinone. Couples the redox reaction to proton translocation (for every two electrons transferred, four hydrogen ions are translocated across the cytoplasmic membrane), and thus conserves the redox energy in a proton gradient. This is NADH-quinone oxidoreductase subunit A 2 from Citrifermentans bemidjiense (strain ATCC BAA-1014 / DSM 16622 / JCM 12645 / Bem) (Geobacter bemidjiensis).